Reading from the N-terminus, the 402-residue chain is 8-amino-7-oxononanoate synthase (402 aa).

Arg-26 provides a ligand contact to substrate. A pyridoxal 5'-phosphate-binding site is contributed by 114-115; the sequence is GY. His-139 contributes to the substrate binding site. Residues Ser-182, His-210, and Thr-239 each coordinate pyridoxal 5'-phosphate. Lys-242 is subject to N6-(pyridoxal phosphate)lysine. Thr-359 lines the substrate pocket.

The protein belongs to the class-II pyridoxal-phosphate-dependent aminotransferase family. BioF subfamily. As to quaternary structure, homodimer. Pyridoxal 5'-phosphate serves as cofactor.

It catalyses the reaction 6-carboxyhexanoyl-[ACP] + L-alanine + H(+) = (8S)-8-amino-7-oxononanoate + holo-[ACP] + CO2. It functions in the pathway cofactor biosynthesis; biotin biosynthesis. In terms of biological role, catalyzes the decarboxylative condensation of pimeloyl-[acyl-carrier protein] and L-alanine to produce 8-amino-7-oxononanoate (AON), [acyl-carrier protein], and carbon dioxide. The polypeptide is 8-amino-7-oxononanoate synthase (Halorhodospira halophila (strain DSM 244 / SL1) (Ectothiorhodospira halophila (strain DSM 244 / SL1))).